Consider the following 362-residue polypeptide: Adenosine deaminase (362 aa).

Zn(2+) is bound by residues histidine 19 and histidine 21. Histidine 21, aspartate 23, and glycine 181 together coordinate substrate. Histidine 208 contacts Zn(2+). Catalysis depends on glutamate 211, which acts as the Proton donor. Aspartate 300 serves as a coordination point for Zn(2+).

The protein belongs to the metallo-dependent hydrolases superfamily. Adenosine and AMP deaminases family. Adenosine deaminase subfamily. Requires Zn(2+) as cofactor.

It carries out the reaction adenosine + H2O + H(+) = inosine + NH4(+). The enzyme catalyses 2'-deoxyadenosine + H2O + H(+) = 2'-deoxyinosine + NH4(+). In terms of biological role, catalyzes the hydrolytic deamination of adenosine and 2-deoxyadenosine. In Mycolicibacterium gilvum (strain PYR-GCK) (Mycobacterium gilvum (strain PYR-GCK)), this protein is Adenosine deaminase.